We begin with the raw amino-acid sequence, 460 residues long: MRSQWVAKRRGQSNVSQMHYARQGMITEEMDYVAKRENLPPDLIRQEVARGRMIIPANINHLNLEPMAIGIASKCKVNANIGASPNSSNLEEEVAKLNLAVKYGADTVMDLSTGGGDLDTIRTAIINASPVPIGTVPIYQAVESVHGNIEKLTPDDFLHIIEKHAQQGVDYMTIHAGLLIEYLPLVRSRLTGIVSRGGGIIAKWMLHHHKQNPLYTHFDEIIEIFKKYDVSFSLGDSLRPGCTHDASDEAQLSELKTLGQLTRRAWEHDVQVMVEGPGHVPMDQIEFNVKKQMEECSEAPFYVLGPLVTDIAPGYDHITSAIGAAMAGWYGTAMLCYVTPKEHLGLPDAEDVRNGLIAYKIAAHAADIARQRPGARDRDDELSKARYNFDWNRQFELSLDPDRAREYHDETLPADIYKTAEFCSMCGPKFCPMQTKVDADALTELEKFLAEQKNKEAIAH.

Substrate contacts are provided by residues Asn80, Met109, Tyr139, His175, Ser195–Gly197, Asp236–Arg239, and Glu275. Residue His279 participates in Zn(2+) binding. Residue Tyr302 coordinates substrate. Position 343 (His343) interacts with Zn(2+). 3 residues coordinate [4Fe-4S] cluster: Cys423, Cys426, and Cys431.

This sequence belongs to the ThiC family. It depends on [4Fe-4S] cluster as a cofactor.

It catalyses the reaction 5-amino-1-(5-phospho-beta-D-ribosyl)imidazole + S-adenosyl-L-methionine = 4-amino-2-methyl-5-(phosphooxymethyl)pyrimidine + CO + 5'-deoxyadenosine + formate + L-methionine + 3 H(+). It functions in the pathway cofactor biosynthesis; thiamine diphosphate biosynthesis. In terms of biological role, catalyzes the synthesis of the hydroxymethylpyrimidine phosphate (HMP-P) moiety of thiamine from aminoimidazole ribotide (AIR) in a radical S-adenosyl-L-methionine (SAM)-dependent reaction. The polypeptide is Phosphomethylpyrimidine synthase (Rippkaea orientalis (strain PCC 8801 / RF-1) (Cyanothece sp. (strain PCC 8801))).